Reading from the N-terminus, the 508-residue chain is Photosystem II CP47 reaction center protein (508 aa).

6 helical membrane-spanning segments follow: residues 21–36 (SVHIMHTALVAGWAGS), 101–115 (IVFSGLCFLAAIWHW), 140–156 (GIHLFLAGVACFGFGAF), 203–218 (IAAGTLGILAGLFHLS), 237–252 (VLSSSIAAVFFAAFVV), and 457–472 (SFALLFFFGHIWHGAR).

This sequence belongs to the PsbB/PsbC family. PsbB subfamily. In terms of assembly, PSII is composed of 1 copy each of membrane proteins PsbA, PsbB, PsbC, PsbD, PsbE, PsbF, PsbH, PsbI, PsbJ, PsbK, PsbL, PsbM, PsbT, PsbX, PsbY, PsbZ, Psb30/Ycf12, at least 3 peripheral proteins of the oxygen-evolving complex and a large number of cofactors. It forms dimeric complexes. Binds multiple chlorophylls. PSII binds additional chlorophylls, carotenoids and specific lipids. serves as cofactor.

It is found in the plastid. It localises to the chloroplast thylakoid membrane. One of the components of the core complex of photosystem II (PSII). It binds chlorophyll and helps catalyze the primary light-induced photochemical processes of PSII. PSII is a light-driven water:plastoquinone oxidoreductase, using light energy to abstract electrons from H(2)O, generating O(2) and a proton gradient subsequently used for ATP formation. The protein is Photosystem II CP47 reaction center protein of Panax ginseng (Korean ginseng).